Consider the following 764-residue polypeptide: Polyribonucleotide nucleotidyltransferase (764 aa).

The Mg(2+) site is built by aspartate 541 and aspartate 547. The KH domain occupies 607-666 (PRVTAIKIPVDKIGEVIGPKGKVINQITEDTGANISIEDDGTVFVGATDGPSAQAAIDAI). Residues 678–747 (GERFLGTVVK…NRGKISLVPV (70 aa)) enclose the S1 motif domain.

It belongs to the polyribonucleotide nucleotidyltransferase family. Mg(2+) serves as cofactor.

It localises to the cytoplasm. The catalysed reaction is RNA(n+1) + phosphate = RNA(n) + a ribonucleoside 5'-diphosphate. Its function is as follows. Involved in mRNA degradation. Catalyzes the phosphorolysis of single-stranded polyribonucleotides processively in the 3'- to 5'-direction. This chain is Polyribonucleotide nucleotidyltransferase, found in Nocardia farcinica (strain IFM 10152).